We begin with the raw amino-acid sequence, 334 residues long: MTVRVGINGFGRIGRNVFRAAATRGADLEIVAVNDLGDVATMAHLLAYDSILGRFPEEVTAEPGAIRAGDTTVKVLAERDPAALPWGDLGVDVVIESTGIFTDAAKARAHVDGGAKKVIIAAPASNEDVTVVLGVNQDAYDPERHTIISNASCTTNCLGVLAKVLHDAVGIESGMMTTVHAYTQDQNLQDAPHKDLRRARAAGLNIVPTSSGAAKAIGLVLPELQGRLDAFALRVPVPTGSVTDLTVTASRSTTVEEVKEAYAKAAAGAYKGLLSYTEAPIVSTDIAGDPASCVFDAELTRVLGSQVKVVGWYDNEWGYSNRLIDLALLVGDTL.

NAD(+) contacts are provided by residues 12–13 (RI), aspartate 35, and arginine 79. Residues 152 to 154 (SCT), threonine 183, arginine 198, 211 to 212 (SG), and arginine 234 each bind D-glyceraldehyde 3-phosphate. Cysteine 153 functions as the Nucleophile in the catalytic mechanism. Residue asparagine 315 participates in NAD(+) binding.

The protein belongs to the glyceraldehyde-3-phosphate dehydrogenase family. In terms of assembly, homotetramer.

The protein localises to the cytoplasm. The enzyme catalyses D-glyceraldehyde 3-phosphate + phosphate + NAD(+) = (2R)-3-phospho-glyceroyl phosphate + NADH + H(+). The protein operates within carbohydrate degradation; glycolysis; pyruvate from D-glyceraldehyde 3-phosphate: step 1/5. Its activity is regulated as follows. Resistant to pentalenolactone. In terms of biological role, catalyzes the oxidative phosphorylation of glyceraldehyde 3-phosphate (G3P) to 1,3-bisphosphoglycerate (BPG) using the cofactor NAD. The first reaction step involves the formation of a hemiacetal intermediate between G3P and a cysteine residue, and this hemiacetal intermediate is then oxidized to a thioester, with concomitant reduction of NAD to NADH. The reduced NADH is then exchanged with the second NAD, and the thioester is attacked by a nucleophilic inorganic phosphate to produce BPG. This is Glyceraldehyde-3-phosphate dehydrogenase 1 (gap1) from Streptomyces avermitilis (strain ATCC 31267 / DSM 46492 / JCM 5070 / NBRC 14893 / NCIMB 12804 / NRRL 8165 / MA-4680).